A 233-amino-acid polypeptide reads, in one-letter code: Aspartate/glutamate leucyltransferase (233 aa).

Belongs to the R-transferase family. Bpt subfamily.

The protein localises to the cytoplasm. It carries out the reaction N-terminal L-glutamyl-[protein] + L-leucyl-tRNA(Leu) = N-terminal L-leucyl-L-glutamyl-[protein] + tRNA(Leu) + H(+). The catalysed reaction is N-terminal L-aspartyl-[protein] + L-leucyl-tRNA(Leu) = N-terminal L-leucyl-L-aspartyl-[protein] + tRNA(Leu) + H(+). Functionally, functions in the N-end rule pathway of protein degradation where it conjugates Leu from its aminoacyl-tRNA to the N-termini of proteins containing an N-terminal aspartate or glutamate. The polypeptide is Aspartate/glutamate leucyltransferase (Vibrio cholerae serotype O1 (strain ATCC 39315 / El Tor Inaba N16961)).